A 297-amino-acid polypeptide reads, in one-letter code: Golgi-associated RAB2 interactor protein 1A (297 aa).

Residues 226-257 (SNRHQTSRDRHTDTATETDNSGNCKSTPLVAS) form a disordered region. Positions 240-257 (ATETDNSGNCKSTPLVAS) are enriched in polar residues.

Belongs to the GARIN family. In terms of assembly, interacts (via N-terminus) with RAB2B (in GTP-bound form). Expressed in testis (at protein level).

It localises to the golgi apparatus. In terms of biological role, RAB2B effector protein required for accurate acrosome formation and normal male fertility. In Mus musculus (Mouse), this protein is Golgi-associated RAB2 interactor protein 1A.